Here is a 367-residue protein sequence, read N- to C-terminus: Probable peptidoglycan glycosyltransferase FtsW (367 aa).

The Cytoplasmic segment spans residues 1–8 (MRRVEGYD). A helical membrane pass occupies residues 9–29 (MIVLMMAVILTCFGVVMVYSA). The Periplasmic portion of the chain corresponds to 30-49 (SSVMAAKKFHDGFFFLKRQS). Residues 50-70 (LYALIGFIGMGVAMHVDYHVW) form a helical membrane-spanning segment. At 71–72 (KK) the chain is on the cytoplasmic side. The chain crosses the membrane as a helical span at residues 73 to 93 (WAVPLFLGTFFLLLLVFVPGI). The Periplasmic segment spans residues 94-138 (GGTAKGASRWIRLPGFNFQPSELAKVALIMYMAYSLEKRQDKLKQ). Residues 139–159 (FMSGFFPYMLILGVFIAVLLA) traverse the membrane as a helical segment. Residues 160–161 (QH) lie on the Cytoplasmic side of the membrane. A helical transmembrane segment spans residues 162 to 182 (DMGAALTMLAVAIVMLFAAGT). Lysine 183 is a topological domain (periplasmic). The helical transmembrane segment at 184 to 204 (VQYILGMGLVALPGICYLVFT) threads the bilayer. Residues 205–225 (KAYRMRRITAFLDPWQDPTDA) are Cytoplasmic-facing. A helical membrane pass occupies residues 226–246 (GFQIIQSWLALGTGGFFGQGL). Residues 247 to 266 (GEGKQKLFYLPEAHTDFILS) are Periplasmic-facing. The helical transmembrane segment at 267-287 (VLGEEMGFIGVVVIASMFLLL) threads the bilayer. Over 288 to 304 (VQRSIRVAIAAEDSFGR) the chain is Cytoplasmic. The chain crosses the membrane as a helical span at residues 305 to 325 (FLAFGIAILLGLEAFVNMAVV). Residues 326–335 (TGLLPTKGIA) are Periplasmic-facing. A helical membrane pass occupies residues 336–356 (LPFLSYGGSSLIISLCSVGVL). Residues 357-367 (LNVSTRMRGAA) are Cytoplasmic-facing.

Belongs to the SEDS family. FtsW subfamily.

It localises to the cell inner membrane. It carries out the reaction [GlcNAc-(1-&gt;4)-Mur2Ac(oyl-L-Ala-gamma-D-Glu-L-Lys-D-Ala-D-Ala)](n)-di-trans,octa-cis-undecaprenyl diphosphate + beta-D-GlcNAc-(1-&gt;4)-Mur2Ac(oyl-L-Ala-gamma-D-Glu-L-Lys-D-Ala-D-Ala)-di-trans,octa-cis-undecaprenyl diphosphate = [GlcNAc-(1-&gt;4)-Mur2Ac(oyl-L-Ala-gamma-D-Glu-L-Lys-D-Ala-D-Ala)](n+1)-di-trans,octa-cis-undecaprenyl diphosphate + di-trans,octa-cis-undecaprenyl diphosphate + H(+). It functions in the pathway cell wall biogenesis; peptidoglycan biosynthesis. Functionally, peptidoglycan polymerase that is essential for cell division. This Geobacter sp. (strain M18) protein is Probable peptidoglycan glycosyltransferase FtsW.